We begin with the raw amino-acid sequence, 191 residues long: UPF0312 protein Shewmr7_1249 (191 aa).

Positions 1 to 22 (MKKQLLAALIGGFLLAPMAASA) are cleaved as a signal peptide.

Belongs to the UPF0312 family. Type 1 subfamily.

The protein localises to the periplasm. The sequence is that of UPF0312 protein Shewmr7_1249 from Shewanella sp. (strain MR-7).